Reading from the N-terminus, the 303-residue chain is Aquaporin NIP1-2 (303 aa).

Residues 1–39 (MAGREDGAAAGAMEEGQDSKEVKCESSEDGSSSSSSSRC) are disordered. The segment covering 17 to 26 (QDSKEVKCES) has biased composition (basic and acidic residues). The next 2 helical transmembrane spans lie at 66 to 86 (ILAEILGTYFMIFAGCGAVVV) and 91 to 111 (GGAVTFPGICAVWGLVVMVLV). The short motif at 123-125 (NPA) is the NPA 1 element. 3 helical membrane-spanning segments follow: residues 145–165 (VVAQVLGSTMASLTLRVVFGG), 188–208 (AAALEFVISFFLMFVVSGVAT), and 212–232 (AIGELAGLAVGATVAVNVLFA). The short motif at 241–243 (NPA) is the NPA 2 element. Residues 255 to 275 (YGGVWVYVAAPVSGTVCGAWA) traverse the membrane as a helical segment.

It belongs to the MIP/aquaporin (TC 1.A.8) family. NIP (TC 1.A.8.12) subfamily. In terms of tissue distribution, expressed in roots and leaves, and at lower levels in anthers.

Its subcellular location is the membrane. Aquaporins facilitate the transport of water and small neutral solutes across cell membranes. This is Aquaporin NIP1-2 (NIP1-2) from Oryza sativa subsp. japonica (Rice).